A 1755-amino-acid polypeptide reads, in one-letter code: Transposon Ty1-OR Gag-Pol polyprotein (1755 aa).

Polar residues-rich tracts occupy residues Met1 to Pro10, Thr48 to Ser60, and Gln127 to Phe152. Disordered stretches follow at residues Met1–Gln93, Pro126–Pro173, and Gly352–Thr421. The span at Thr153–Thr165 shows a compositional bias: low complexity. The RNA-binding stretch occupies residues Asn299–His401. Residues Asn402–Ser418 show a composition bias toward low complexity. The residue at position 416 (Ser416) is a Phosphoserine. Asp461 (for protease activity; shared with dimeric partner) is an active-site residue. The tract at residues Asn583 to Cys640 is integrase-type zinc finger-like. The Integrase catalytic domain occupies Asn660–Pro835. Mg(2+)-binding residues include Asp671 and Asp736. 3 disordered regions span residues Ser956 to Lys1087, Arg1092 to Pro1111, and Asp1130 to Thr1187. Low complexity predominate over residues Ser960–Thr969. A compositionally biased stretch (polar residues) spans Ser1005–Thr1015. Positions Glu1038–Ser1053 are enriched in basic and acidic residues. 2 stretches are compositionally biased toward polar residues: residues Tyr1054–Asp1082 and Pro1101–Pro1111. The Bipartite nuclear localization signal signature appears at Lys1178–Arg1212. Residues Asn1338–Gln1476 enclose the Reverse transcriptase Ty1/copia-type domain. Mg(2+)-binding residues include Asp1346, Asp1427, Asp1428, Asp1610, Glu1652, and Asp1685. The 143-residue stretch at Asp1610 to Lys1752 folds into the RNase H Ty1/copia-type domain.

In terms of assembly, the capsid protein forms a homotrimer, from which the VLPs are assembled. The protease is a homodimer, whose active site consists of two apposed aspartic acid residues. Post-translationally, initially, virus-like particles (VLPs) are composed of the structural unprocessed proteins Gag and Gag-Pol, and also contain the host initiator methionine tRNA (tRNA(i)-Met) which serves as a primer for minus-strand DNA synthesis, and a dimer of genomic Ty RNA. Processing of the polyproteins occurs within the particle and proceeds by an ordered pathway, called maturation. First, the protease (PR) is released by autocatalytic cleavage of the Gag-Pol polyprotein yielding capsid protein p45 and a Pol-p154 precursor protein. This cleavage is a prerequisite for subsequent processing of Pol-p154 at the remaining sites to release the mature structural and catalytic proteins. Maturation takes place prior to the RT reaction and is required to produce transposition-competent VLPs.

It is found in the cytoplasm. The protein localises to the nucleus. It catalyses the reaction DNA(n) + a 2'-deoxyribonucleoside 5'-triphosphate = DNA(n+1) + diphosphate. It carries out the reaction Endonucleolytic cleavage to 5'-phosphomonoester.. Functionally, capsid protein (CA) is the structural component of the virus-like particle (VLP), forming the shell that encapsulates the retrotransposons dimeric RNA genome. The particles are assembled from trimer-clustered units and there are holes in the capsid shells that allow for the diffusion of macromolecules. CA also has nucleocapsid-like chaperone activity, promoting primer tRNA(i)-Met annealing to the multipartite primer-binding site (PBS), dimerization of Ty1 RNA and initiation of reverse transcription. In terms of biological role, the aspartyl protease (PR) mediates the proteolytic cleavages of the Gag and Gag-Pol polyproteins after assembly of the VLP. Reverse transcriptase/ribonuclease H (RT) is a multifunctional enzyme that catalyzes the conversion of the retro-elements RNA genome into dsDNA within the VLP. The enzyme displays a DNA polymerase activity that can copy either DNA or RNA templates, and a ribonuclease H (RNase H) activity that cleaves the RNA strand of RNA-DNA heteroduplexes during plus-strand synthesis and hydrolyzes RNA primers. The conversion leads to a linear dsDNA copy of the retrotransposon that includes long terminal repeats (LTRs) at both ends. Its function is as follows. Integrase (IN) targets the VLP to the nucleus, where a subparticle preintegration complex (PIC) containing at least integrase and the newly synthesized dsDNA copy of the retrotransposon must transit the nuclear membrane. Once in the nucleus, integrase performs the integration of the dsDNA into the host genome. The protein is Transposon Ty1-OR Gag-Pol polyprotein (TY1B-OR) of Saccharomyces cerevisiae (strain ATCC 204508 / S288c) (Baker's yeast).